The primary structure comprises 293 residues: Formamidopyrimidine-DNA glycosylase (293 aa).

The active-site Schiff-base intermediate with DNA is Pro-2. The active-site Proton donor is Glu-3. Catalysis depends on Lys-61, which acts as the Proton donor; for beta-elimination activity. 3 residues coordinate DNA: His-104, Arg-123, and Lys-169. An FPG-type zinc finger spans residues 255–289 (DAYGREGEPCRRCGAIMRRDKFMNRSSFYCPRCQP). Arg-279 functions as the Proton donor; for delta-elimination activity in the catalytic mechanism.

This sequence belongs to the FPG family. As to quaternary structure, monomer. Zn(2+) serves as cofactor.

It catalyses the reaction Hydrolysis of DNA containing ring-opened 7-methylguanine residues, releasing 2,6-diamino-4-hydroxy-5-(N-methyl)formamidopyrimidine.. The catalysed reaction is 2'-deoxyribonucleotide-(2'-deoxyribose 5'-phosphate)-2'-deoxyribonucleotide-DNA = a 3'-end 2'-deoxyribonucleotide-(2,3-dehydro-2,3-deoxyribose 5'-phosphate)-DNA + a 5'-end 5'-phospho-2'-deoxyribonucleoside-DNA + H(+). In terms of biological role, involved in base excision repair of DNA damaged by oxidation or by mutagenic agents. Acts as a DNA glycosylase that recognizes and removes damaged bases. Has a preference for oxidized purines, such as 7,8-dihydro-8-oxoguanine (8-oxoG). Has AP (apurinic/apyrimidinic) lyase activity and introduces nicks in the DNA strand. Cleaves the DNA backbone by beta-delta elimination to generate a single-strand break at the site of the removed base with both 3'- and 5'-phosphates. The sequence is that of Formamidopyrimidine-DNA glycosylase from Mycolicibacterium vanbaalenii (strain DSM 7251 / JCM 13017 / BCRC 16820 / KCTC 9966 / NRRL B-24157 / PYR-1) (Mycobacterium vanbaalenii).